The sequence spans 130 residues: Protein YchQ (130 aa).

Residues 1–9 are Periplasmic-facing; the sequence is MTSFSTLLS. A helical membrane pass occupies residues 10–28; the sequence is VHLISIALSVGLLTLRFWL. Residues 29 to 39 lie on the Cytoplasmic side of the membrane; that stretch reads RYQKHPQAFAR. A helical membrane pass occupies residues 40 to 59; that stretch reads WTRIVPPVVDTLLLLSGIAL. Residues 60–73 lie on the Periplasmic side of the membrane; the sequence is MAKAHILPFSGQAQ. The helical transmembrane segment at 74-93 threads the bilayer; the sequence is WLTEKLFGVIIYIVLGFIAL. The Cytoplasmic segment spans residues 94–104; sequence DYRRMHSQQAR. The helical transmembrane segment at 105-124 threads the bilayer; the sequence is IIAFPLALVVLYIIIKLATT. At 125–130 the chain is on the periplasmic side; it reads KVPLLG.

The protein belongs to the SirB2 family.

It localises to the cell inner membrane. The protein is Protein YchQ (ychQ) of Escherichia coli (strain K12).